The following is a 313-amino-acid chain: uncharacterized protein (313 aa).

Positions 1-24 are cleaved as a signal peptide; that stretch reads MKRRRRWRGWLLFLALCFCLLCEA. 14 N-linked (GlcNAc...) asparagine; by host glycosylation sites follow: asparagine 28, asparagine 43, asparagine 57, asparagine 77, asparagine 101, asparagine 102, asparagine 109, asparagine 149, asparagine 168, asparagine 215, asparagine 222, asparagine 251, asparagine 254, and asparagine 267. The tract at residues 47-73 is disordered; sequence ATTGTTTTSPNVTSTTSNTVTTPTTVS. A compositionally biased stretch (low complexity) spans 90–114; that stretch reads STVSGTRNTRNNNTTTIGTNATSPS. Positions 90–117 are disordered; it reads STVSGTRNTRNNNTTTIGTNATSPSSSV.

This sequence belongs to the HHV-5 US34A protein family.

This is an uncharacterized protein from Homo sapiens (Human).